Consider the following 737-residue polypeptide: Glycogen [starch] synthase, muscle (737 aa).

A Phosphoserine; by AMPK and PKA modification is found at serine 8. Phosphoserine is present on serine 11. UDP is bound at residue lysine 39. Positions 205 and 211 each coordinate UDP-alpha-D-glucose. Positions 291, 292, 294, 297, and 301 each coordinate alpha-D-glucose 6-phosphate. Arginine 331 is a binding site for UDP. UDP-alpha-D-glucose is bound at residue arginine 331. Serine 412 carries the phosphoserine modification. Histidine 501 is an alpha-D-glucose 6-phosphate binding site. UDP-alpha-D-glucose is bound by residues glutamate 510, tryptophan 512, and glycine 513. Threonine 515 serves as a coordination point for UDP. The alpha-D-glucose 6-phosphate site is built by arginine 582 and arginine 586. The tract at residues 634–737 (YRYPRPASVP…PTSSLGEERN (104 aa)) is disordered. A Phosphoserine; by DYRK2, GSK3-alpha, GSK3-beta and PASK modification is found at serine 641. Phosphoserine; by GSK3-alpha and GSK3-beta is present on residues serine 645 and serine 649. A Phosphoserine modification is found at serine 652. Serine 653 carries the phosphoserine; by GSK3-alpha and GSK3-beta modification. Serine 657 carries the phosphoserine; by CK2 modification. Residues 658 to 681 (EDEEDPRNGPLEEDSERYDEDEEA) are compositionally biased toward acidic residues. Serine 672 carries the phosphoserine modification. Residues 682–695 (AKDRRNIRAPEWPR) are compositionally biased toward basic and acidic residues. Serine 698 bears the Phosphoserine mark. Polar residues predominate over residues 698–714 (SCTSSTSGSKRNSVDTA). Threonine 700 carries the post-translational modification Phosphothreonine. Phosphoserine is present on serine 710. The span at 715 to 737 (TSSSLSTPSEPLSPTSSLGEERN) shows a compositional bias: low complexity. Phosphothreonine is present on threonine 721. 2 positions are modified to phosphoserine: serine 727 and serine 731.

This sequence belongs to the glycosyltransferase 3 family. In terms of assembly, part of the GYS1-GYG1 complex, a heterooctamer composed of a tetramer of GYS1 and 2 dimers of GYG1, where each GYS1 protomer binds to one GYG1 subunit (via GYG1 C-terminus); the GYS1 tetramer may dissociate from GYG1 dimers to continue glycogen polymerization on its own. Phosphorylation at Ser-8 by AMPK inactivates the enzyme activity. Primed phosphorylation at Ser-657 (site 5) by CSNK2A1 and CSNK2A2 is required for inhibitory phosphorylation at Ser-641 (site 3a), Ser-645 (site 3b), Ser-649 (site 3c) and Ser-653 (site 4) by GSK3A an GSK3B. Phosphorylated at Ser-641 by PASK, leading to inactivation; phosphorylation by PASK is inhibited by glycogen. Phosphorylated at Ser-641 by DYRK2, leading to inactivation. Dephosphorylation at Ser-641 and Ser-645 by PP1 activates the enzyme.

It carries out the reaction [(1-&gt;4)-alpha-D-glucosyl](n) + UDP-alpha-D-glucose = [(1-&gt;4)-alpha-D-glucosyl](n+1) + UDP + H(+). It participates in glycan biosynthesis; glycogen biosynthesis. Allosteric activation by glucose-6-phosphate. Phosphorylation reduces the activity towards UDP-glucose. When in the non-phosphorylated state, glycogen synthase does not require glucose-6-phosphate as an allosteric activator; when phosphorylated it does. Glycogen synthase participates in the glycogen biosynthetic process along with glycogenin and glycogen branching enzyme. Extends the primer composed of a few glucose units formed by glycogenin by adding new glucose units to it. In this context, glycogen synthase transfers the glycosyl residue from UDP-Glc to the non-reducing end of alpha-1,4-glucan. This chain is Glycogen [starch] synthase, muscle (GYS1), found in Macaca mulatta (Rhesus macaque).